The sequence spans 226 residues: Triosephosphate isomerase (226 aa).

A substrate-binding site is contributed by 12 to 14 (NFK). Histidine 96 functions as the Electrophile in the catalytic mechanism. Glutamate 144 serves as the catalytic Proton acceptor. Residues isoleucine 149, glycine 184, and 205 to 206 (AS) contribute to the substrate site.

This sequence belongs to the triosephosphate isomerase family. As to quaternary structure, homotetramer; dimer of dimers.

It localises to the cytoplasm. It catalyses the reaction D-glyceraldehyde 3-phosphate = dihydroxyacetone phosphate. It participates in carbohydrate biosynthesis; gluconeogenesis. Its pathway is carbohydrate degradation; glycolysis; D-glyceraldehyde 3-phosphate from glycerone phosphate: step 1/1. In terms of biological role, involved in the gluconeogenesis. Catalyzes stereospecifically the conversion of dihydroxyacetone phosphate (DHAP) to D-glyceraldehyde-3-phosphate (G3P). The sequence is that of Triosephosphate isomerase from Thermococcus kodakarensis (strain ATCC BAA-918 / JCM 12380 / KOD1) (Pyrococcus kodakaraensis (strain KOD1)).